The primary structure comprises 304 residues: Insulin-like growth factor-binding protein 2 (304 aa).

Residues 1–34 form the signal peptide; the sequence is MLPRLGGPALPLLLPSLLLLLLLGAGGCGPGVRA. The region spanning 36–118 is the IGFBP N-terminal domain; the sequence is VLFRCPPCTP…VTGAGTCEKR (83 aa). Disulfide bonds link Cys40/Cys68, Cys43/Cys70, Cys51/Cys71, Cys59/Cys74, Cys82/Cys95, Cys89/Cys115, Cys206/Cys240, Cys251/Cys262, and Cys264/Cys285. The 83-residue stretch at 203 to 285 folds into the Thyroglobulin type-1 domain; it reads RTPCQQELDQ…APTIRGDPEC (83 aa). The short motif at 280–282 is the Cell attachment site element; the sequence is RGD.

In terms of assembly, interacts with IGF1. Interacts with IGF2. Interacts (via RGD motif) with integrin alpha5/ITGA5; this interaction induces cell migration, adhesion or apoptosis according to the context. Interacts with PTPRB; this interaction leads to PTPRB dimerization and inactivation. In terms of processing, cleaved by MMP9 leading to release of free IGF2 from IGFBP2-IGF2 complex, which contributes to enhance the motility and the growth of astrocytes. Post-translationally, O-glycosylated. In terms of tissue distribution, in adults, expressed in brain, testes, ovaries, and kidney. Expression in the adult liver is barely detectable.

It localises to the secreted. In terms of biological role, multifunctional protein that plays a critical role in regulating the availability of IGFs such as IGF1 and IGF2 to their receptors and thereby regulates IGF-mediated cellular processes including proliferation, differentiation, and apoptosis in a cell-type specific manner. Functions coordinately with receptor protein tyrosine phosphatase beta/PTPRB and the IGF1 receptor to regulate IGF1-mediated signaling by stimulating the phosphorylation of PTEN leading to its inactivation and AKT1 activation. Plays a positive role in cell migration via interaction with integrin alpha5/ITGA5 through an RGD motif. Additionally, interaction with ITGA5/ITGB1 enhances the adhesion of endothelial progenitor cells to endothelial cells. Upon mitochondrial damage, facilitates apoptosis with ITGA5 of podocytes, and then activates the phosphorylation of focal adhesion kinase (FAK)-mediated mitochondrial injury. This Rattus norvegicus (Rat) protein is Insulin-like growth factor-binding protein 2 (Igfbp2).